The chain runs to 268 residues: UDP-2,3-diacylglucosamine hydrolase (268 aa).

Mn(2+) contacts are provided by Asp25, His27, Asp58, Asn97, and His132. Substrate is bound at residue 97-98 (NR). The substrate site is built by Asp140, Ser178, Glu191, and His222. The Mn(2+) site is built by His222 and His224.

This sequence belongs to the LpxH family. Mn(2+) is required as a cofactor.

It is found in the cell inner membrane. It catalyses the reaction UDP-2-N,3-O-bis[(3R)-3-hydroxytetradecanoyl]-alpha-D-glucosamine + H2O = 2-N,3-O-bis[(3R)-3-hydroxytetradecanoyl]-alpha-D-glucosaminyl 1-phosphate + UMP + 2 H(+). It functions in the pathway glycolipid biosynthesis; lipid IV(A) biosynthesis; lipid IV(A) from (3R)-3-hydroxytetradecanoyl-[acyl-carrier-protein] and UDP-N-acetyl-alpha-D-glucosamine: step 4/6. Hydrolyzes the pyrophosphate bond of UDP-2,3-diacylglucosamine to yield 2,3-diacylglucosamine 1-phosphate (lipid X) and UMP by catalyzing the attack of water at the alpha-P atom. Involved in the biosynthesis of lipid A, a phosphorylated glycolipid that anchors the lipopolysaccharide to the outer membrane of the cell. This Ralstonia nicotianae (strain ATCC BAA-1114 / GMI1000) (Ralstonia solanacearum) protein is UDP-2,3-diacylglucosamine hydrolase.